We begin with the raw amino-acid sequence, 171 residues long: dCTP pyrophosphatase (171 aa).

The catalysed reaction is dCTP + H2O = dCMP + diphosphate + H(+). In Enterobacteria phage T4 (Bacteriophage T4), this protein is dCTP pyrophosphatase (56).